A 393-amino-acid chain; its full sequence is MAELRQVPGGRETPQGELRPEVVEDEVPRSPVAEEPGGGGSSSSEAKLSPREEEELDPRIQEELEHLNQASEEINQVELQLDEARTTYRRILQESARKLNTQGSHLGSCIEKARPYYEARRLAKEAQQETQKAALRYERAVSMHNAAREMVFVAEQGVMADKNRLDPTWQEMLNHATCKVNEAEEERLRGEREHQRVTRLCQQAEARVQALQKTLRRAIGKSRPYFELKAQFSQILEEHKAKVTELEQQVAQAKTRYSVALRNLEQISEQIHARRRGGLPPHPLGPRRSSPVGAEAGPEDMEDGDSGIEGAEGAGLEEGSSLGPGPAPDTDTLSLLSLRTVASDLQKCDSVEHLRGLSDHVSLDGQELGTRSGGRRGSDGGARGGRHQRSVSL.

The interval 1 to 58 (MAELRQVPGGRETPQGELRPEVVEDEVPRSPVAEEPGGGGSSSSEAKLSPREEEELDP) is disordered. Residue threonine 13 is modified to Phosphothreonine. Residues 18 to 28 (LRPEVVEDEVP) show a composition bias toward basic and acidic residues. 2 positions are modified to phosphoserine: serine 30 and serine 49. Coiled coils occupy residues 59–140 (RIQE…YERA) and 169–272 (WQEM…EQIH). A disordered region spans residues 273-332 (ARRRGGLPPHPLGPRRSSPVGAEAGPEDMEDGDSGIEGAEGAGLEEGSSLGPGPAPDTDT). Positions 297 to 306 (GPEDMEDGDS) are enriched in acidic residues. Over residues 317-332 (EEGSSLGPGPAPDTDT) the composition is skewed to low complexity. A phosphoserine mark is found at serine 343, serine 350, serine 358, serine 362, and serine 378. Residues 362-393 (SLDGQELGTRSGGRRGSDGGARGGRHQRSVSL) form a disordered region. Over residues 384–393 (GGRHQRSVSL) the composition is skewed to basic residues.

This sequence belongs to the SH3BP5 family.

Functions as a guanine nucleotide exchange factor (GEF) for RAB11A. The sequence is that of SH3 domain-binding protein 5-like (SH3BP5L) from Homo sapiens (Human).